The following is a 179-amino-acid chain: ATP synthase subunit delta (179 aa).

It belongs to the ATPase delta chain family. F-type ATPases have 2 components, F(1) - the catalytic core - and F(0) - the membrane proton channel. F(1) has five subunits: alpha(3), beta(3), gamma(1), delta(1), epsilon(1). F(0) has three main subunits: a(1), b(2) and c(10-14). The alpha and beta chains form an alternating ring which encloses part of the gamma chain. F(1) is attached to F(0) by a central stalk formed by the gamma and epsilon chains, while a peripheral stalk is formed by the delta and b chains.

The protein localises to the cell inner membrane. Functionally, f(1)F(0) ATP synthase produces ATP from ADP in the presence of a proton or sodium gradient. F-type ATPases consist of two structural domains, F(1) containing the extramembraneous catalytic core and F(0) containing the membrane proton channel, linked together by a central stalk and a peripheral stalk. During catalysis, ATP synthesis in the catalytic domain of F(1) is coupled via a rotary mechanism of the central stalk subunits to proton translocation. Its function is as follows. This protein is part of the stalk that links CF(0) to CF(1). It either transmits conformational changes from CF(0) to CF(1) or is implicated in proton conduction. The polypeptide is ATP synthase subunit delta (Maricaulis maris (strain MCS10) (Caulobacter maris)).